The following is a 177-amino-acid chain: Keratin-associated protein 1-1 (177 aa).

It belongs to the KRTAP type 1 family. In terms of assembly, interacts with hair keratins. Expressed in the middle/upper portions of the hair cortex, in the region termed the keratogenous zone.

In terms of biological role, in the hair cortex, hair keratin intermediate filaments are embedded in an interfilamentous matrix, consisting of hair keratin-associated proteins (KRTAP), which are essential for the formation of a rigid and resistant hair shaft through their extensive disulfide bond cross-linking with abundant cysteine residues of hair keratins. The matrix proteins include the high-sulfur and high-glycine-tyrosine keratins. This chain is Keratin-associated protein 1-1 (KRTAP1-1), found in Homo sapiens (Human).